A 308-amino-acid polypeptide reads, in one-letter code: Zinc-binding protein TroA (308 aa).

A signal peptide spans 1–22; it reads MIRERICACVLALGMLTGFTHA. Zn(2+)-binding residues include H68, H133, H199, and D279.

It belongs to the bacterial solute-binding protein 9 family. Monomer.

Its subcellular location is the periplasm. In terms of biological role, part of the ATP-binding cassette (ABC) transport system TroABC involved in zinc import. Binds zinc with high affinity and specificity and delivers it to the membrane permease for translocation into the cytoplasm. The polypeptide is Zinc-binding protein TroA (troA) (Treponema pallidum (strain Nichols)).